The primary structure comprises 305 residues: Superkiller complex protein 8 (305 aa).

Met-1 is modified (N-acetylmethionine). The residue at position 2 (Thr-2) is an N-acetylthreonine; in WD repeat-containing protein 61, N-terminally processed. WD repeat units follow at residues 14 to 57, 62 to 101, 104 to 143, 146 to 187, 188 to 227, 230 to 269, and 272 to 305; these read AHDD…LELQ, GHQLGVVSVDISHTLPIAASSSLDAHIRLWDLENGKQMKS, AGPVDAWTLAFSPDSQYLATGTHMGKVNIFGVESGKKEYS, TRGK…HTLE, GHAMPIRSLTFSPDSQLLVTASDDGYIKIYDVQHANLAGT, GHASWVLNVAFCPDDTHFVSSSSDKSVKVWDVGTRTCIHT, and DHQDQVWGVKYNGNGSKIVSVGDDQEIHVYDCPI.

The protein belongs to the SKI8 family. Component of the PAF1 complex, which consists of CDC73, PAF1, LEO1, CTR9, RTF1 and SKIC8. The PAF1 complex interacts with PHF5A. Within the PAF1 complex interacts directly with PHF5A. Component of the SKI complex which consists of SKIC2, SKIC3 and SKIC8.

It localises to the nucleus. The protein localises to the cytoplasm. Functionally, component of the PAF1 complex (PAF1C) which has multiple functions during transcription by RNA polymerase II and is implicated in regulation of development and maintenance of embryonic stem cell pluripotency. PAF1C associates with RNA polymerase II through interaction with POLR2A CTD non-phosphorylated and 'Ser-2'- and 'Ser-5'-phosphorylated forms and is involved in transcriptional elongation, acting both independently and synergistically with TCEA1 and in cooperation with the DSIF complex and HTATSF1. PAF1C is required for transcription of Hox and Wnt target genes. PAF1C is involved in hematopoiesis and stimulates transcriptional activity of KMT2A/MLL1; it promotes leukemogenesis through association with KMT2A/MLL1-rearranged oncoproteins, such as KMT2A/MLL1-MLLT3/AF9 and KMT2A/MLL1-MLLT1/ENL. PAF1C is involved in histone modifications such as ubiquitination of histone H2B and methylation on histone H3 'Lys-4' (H3K4me3). PAF1C recruits the RNF20/40 E3 ubiquitin-protein ligase complex and the E2 enzyme UBE2A or UBE2B to chromatin which mediate monoubiquitination of 'Lys-120' of histone H2B (H2BK120ub1); UB2A/B-mediated H2B ubiquitination is proposed to be coupled to transcription. PAF1C is involved in mRNA 3' end formation probably through association with cleavage and poly(A) factors. In case of infection by influenza A strain H3N2, PAF1C associates with viral NS1 protein, thereby regulating gene transcription. Required for mono- and trimethylation on histone H3 'Lys-4' (H3K4me3), dimethylation on histone H3 'Lys-79' (H3K4me3). Required for Hox gene transcription. Also acts as a component of the SKI complex, a multiprotein complex that assists the RNA-degrading exosome during the mRNA decay and quality-control pathways. The SKI complex catalyzes mRNA extraction from 80S ribosomal complexes in the 3'-5' direction and channels mRNA to the cytosolic exosome for degradation. SKI-mediated extraction of mRNA from stalled ribosomes allow binding of the Pelota-HBS1L complex and subsequent ribosome disassembly by ABCE1 for ribosome recycling. The sequence is that of Superkiller complex protein 8 (Skic8) from Mus musculus (Mouse).